Consider the following 50-residue polypeptide: Bacteriocin-like protein SboX (50 aa).

The polypeptide is Bacteriocin-like protein SboX (sboX) (Bacillus subtilis (strain 168)).